The following is a 764-amino-acid chain: Mitogen-activated protein kinase kinase kinase 1b (764 aa).

Disordered regions lie at residues 1 to 81 (MVEE…IQQQ), 120 to 260 (KSIA…TATR), 325 to 348 (PNLA…SSAM), and 360 to 392 (VPEL…HYGS). Residues 14-30 (GSWGSGEDGGSSHGGKG) show a composition bias toward gly residues. Composition is skewed to low complexity over residues 60–76 (VHST…LSKS) and 125–135 (SQPLSSPSLSQ). Over residues 136-145 (EHGEASHSND) the composition is skewed to basic and acidic residues. Residues 184 to 201 (YVNSQPQNHYGRKNSPSQ) are compositionally biased toward polar residues. The region spanning 431-684 (WFKGDFIGSG…CDMLLTHPFI (254 aa)) is the Protein kinase domain. Residues 437–445 (IGSGTFGSV) and Lys459 contribute to the ATP site. The active-site Proton acceptor is Asp554. The disordered stretch occupies residues 706–764 (EERSIDVSESPSIATSSQSGSSPSVAGDAVSPASVAVRPRSMRTLRSEFSMSSPESIAS). Positions 715–729 (SPSIATSSQSGSSPS) are enriched in low complexity. Over residues 752-764 (SEFSMSSPESIAS) the composition is skewed to polar residues.

Belongs to the protein kinase superfamily. STE Ser/Thr protein kinase family. MAP kinase kinase kinase subfamily.

It is found in the cell membrane. The enzyme catalyses L-seryl-[protein] + ATP = O-phospho-L-seryl-[protein] + ADP + H(+). It carries out the reaction L-threonyl-[protein] + ATP = O-phospho-L-threonyl-[protein] + ADP + H(+). Functionally, the CERK1, MEKK1a/b, MKK1a/b/c and MPK4a/b proteins are involved in pathogen defense. The pathway induces rapid growth inhibition, cell wall depositions and accumulation of defense-related transcripts. This protein is required for responses to chitin and acts redundantly with MEKK1a. In Physcomitrium patens (Spreading-leaved earth moss), this protein is Mitogen-activated protein kinase kinase kinase 1b (MEKK1b).